The following is a 427-amino-acid chain: Serine--tRNA ligase (427 aa).

An L-serine-binding site is contributed by 232–234; the sequence is TAE. An ATP-binding site is contributed by 263–265; it reads RSE. Position 286 (E286) interacts with L-serine. Residue 350–353 coordinates ATP; that stretch reads EISS. An L-serine-binding site is contributed by S385.

Belongs to the class-II aminoacyl-tRNA synthetase family. Type-1 seryl-tRNA synthetase subfamily. In terms of assembly, homodimer. The tRNA molecule binds across the dimer.

Its subcellular location is the cytoplasm. It carries out the reaction tRNA(Ser) + L-serine + ATP = L-seryl-tRNA(Ser) + AMP + diphosphate + H(+). The enzyme catalyses tRNA(Sec) + L-serine + ATP = L-seryl-tRNA(Sec) + AMP + diphosphate + H(+). Its pathway is aminoacyl-tRNA biosynthesis; selenocysteinyl-tRNA(Sec) biosynthesis; L-seryl-tRNA(Sec) from L-serine and tRNA(Sec): step 1/1. Its function is as follows. Catalyzes the attachment of serine to tRNA(Ser). Is also able to aminoacylate tRNA(Sec) with serine, to form the misacylated tRNA L-seryl-tRNA(Sec), which will be further converted into selenocysteinyl-tRNA(Sec). In Aromatoleum aromaticum (strain DSM 19018 / LMG 30748 / EbN1) (Azoarcus sp. (strain EbN1)), this protein is Serine--tRNA ligase.